A 560-amino-acid polypeptide reads, in one-letter code: Chaperonin GroEL 2 (560 aa).

Residues 29–32 (TLGP), 86–90 (DGTTT), glycine 413, 478–480 (NAA), and aspartate 494 each bind ATP.

It belongs to the chaperonin (HSP60) family. In terms of assembly, forms a cylinder of 14 subunits composed of two heptameric rings stacked back-to-back. Interacts with the co-chaperonin GroES.

Its subcellular location is the cytoplasm. It carries out the reaction ATP + H2O + a folded polypeptide = ADP + phosphate + an unfolded polypeptide.. In terms of biological role, together with its co-chaperonin GroES, plays an essential role in assisting protein folding. The GroEL-GroES system forms a nano-cage that allows encapsulation of the non-native substrate proteins and provides a physical environment optimized to promote and accelerate protein folding. The polypeptide is Chaperonin GroEL 2 (Trichormus variabilis (strain ATCC 29413 / PCC 7937) (Anabaena variabilis)).